Here is a 198-residue protein sequence, read N- to C-terminus: Recombination protein RecR (198 aa).

The segment at 57-72 (CSVCGHITDKDPCYIC) adopts a C4-type zinc-finger fold. A Toprim domain is found at 80–175 (SVLCVVQESK…KVTRIAHGLP (96 aa)).

The protein belongs to the RecR family.

In terms of biological role, may play a role in DNA repair. It seems to be involved in an RecBC-independent recombinational process of DNA repair. It may act with RecF and RecO. The chain is Recombination protein RecR from Listeria innocua serovar 6a (strain ATCC BAA-680 / CLIP 11262).